Consider the following 768-residue polypeptide: Vitamin B12-dependent ribonucleoside-diphosphate reductase (768 aa).

Residues 3–97 (KEVVKRDGTV…LYREKRRAIR (95 aa)) form the ATP-cone domain. Residues Ser-234, 249-250 (AC), Gly-278, 432-436 (NPCGE), and 579-583 (PTGTI) each bind substrate. A disulfide bond links Cys-250 and Cys-445. Catalysis depends on Asn-432, which acts as the Proton acceptor. Cys-434 acts as the Cysteine radical intermediate in catalysis. Glu-436 functions as the Proton acceptor in the catalytic mechanism.

It belongs to the ribonucleoside diphosphate reductase class-2 family. As to quaternary structure, monomer. Adenosylcob(III)alamin is required as a cofactor.

The catalysed reaction is a 2'-deoxyribonucleoside 5'-diphosphate + [thioredoxin]-disulfide + H2O = a ribonucleoside 5'-diphosphate + [thioredoxin]-dithiol. Provides the precursors necessary for DNA synthesis. Catalyzes the biosynthesis of deoxyribonucleotides from the corresponding ribonucleotides. The protein is Vitamin B12-dependent ribonucleoside-diphosphate reductase of Thermoplasma acidophilum (strain ATCC 25905 / DSM 1728 / JCM 9062 / NBRC 15155 / AMRC-C165).